We begin with the raw amino-acid sequence, 303 residues long: ATP phosphoribosyltransferase (303 aa).

The protein belongs to the ATP phosphoribosyltransferase family. Long subfamily. The cofactor is Mg(2+).

The protein localises to the cytoplasm. The enzyme catalyses 1-(5-phospho-beta-D-ribosyl)-ATP + diphosphate = 5-phospho-alpha-D-ribose 1-diphosphate + ATP. It participates in amino-acid biosynthesis; L-histidine biosynthesis; L-histidine from 5-phospho-alpha-D-ribose 1-diphosphate: step 1/9. Feedback inhibited by histidine. In terms of biological role, catalyzes the condensation of ATP and 5-phosphoribose 1-diphosphate to form N'-(5'-phosphoribosyl)-ATP (PR-ATP). Has a crucial role in the pathway because the rate of histidine biosynthesis seems to be controlled primarily by regulation of HisG enzymatic activity. The chain is ATP phosphoribosyltransferase from Haemophilus influenzae (strain 86-028NP).